The primary structure comprises 138 residues: Small ribosomal subunit protein uS11c (138 aa).

A disordered region spans residues 1-23 (MAKPIQRIGSRRNGPIGSRKNGR).

This sequence belongs to the universal ribosomal protein uS11 family. As to quaternary structure, part of the 30S ribosomal subunit.

It is found in the plastid. It localises to the chloroplast. This chain is Small ribosomal subunit protein uS11c, found in Platanus occidentalis (Sycamore).